The sequence spans 122 residues: Small ribosomal subunit protein uS13 (122 aa).

A disordered region spans residues 95–122; the sequence is NLPVRGQRTHTNARTRKGKAKPIAGKKK.

The protein belongs to the universal ribosomal protein uS13 family. In terms of assembly, part of the 30S ribosomal subunit. Forms a loose heterodimer with protein S19. Forms two bridges to the 50S subunit in the 70S ribosome.

Its function is as follows. Located at the top of the head of the 30S subunit, it contacts several helices of the 16S rRNA. In the 70S ribosome it contacts the 23S rRNA (bridge B1a) and protein L5 of the 50S subunit (bridge B1b), connecting the 2 subunits; these bridges are implicated in subunit movement. Contacts the tRNAs in the A and P-sites. The chain is Small ribosomal subunit protein uS13 from Methylobacterium nodulans (strain LMG 21967 / CNCM I-2342 / ORS 2060).